Reading from the N-terminus, the 57-residue chain is Delta-elapitoxin-Cb1a (57 aa).

4 disulfides stabilise this stretch: Cys3/Cys22, Cys15/Cys36, Cys40/Cys49, and Cys50/Cys55.

It belongs to the three-finger toxin family. Short-chain subfamily. Expressed by the venom gland.

It is found in the secreted. Its function is as follows. This toxin shifts the voltage-dependence of Nav1.4/SCN4A activation to more hyperpolarised potentials, inhibits inactivation, and produces large ramp currents, consistent with its profound effects on contractile force in an isolated skeletal muscle preparation. This toxin produces large muscle contractions and fasciculations in the indirectly stimulated chick biventer cervicis nerve-muscle assay, which are significantly inhibited by the addition of the sodium channel antagonist tetrodotoxin. This is Delta-elapitoxin-Cb1a from Calliophis bivirgatus (Blue Malaysian coral snake).